A 149-amino-acid chain; its full sequence is Cytochrome c-556 (149 aa).

An N-terminal signal peptide occupies residues 1-20; the sequence is MLRTVIVAGALVLTASAVMA. Positions 32, 137, 140, and 141 each coordinate heme c.

As to quaternary structure, monomer. Binds 1 heme c group covalently per subunit.

In terms of biological role, low-spin monoheme cytochrome c. The protein is Cytochrome c-556 of Rhodopseudomonas palustris (strain ATCC BAA-98 / CGA009).